Here is a 183-residue protein sequence, read N- to C-terminus: Large ribosomal subunit protein uL5 (183 aa).

This sequence belongs to the universal ribosomal protein uL5 family. Part of the 50S ribosomal subunit; part of the 5S rRNA/L5/L18/L25 subcomplex. Contacts the 5S rRNA and the P site tRNA. Forms a bridge to the 30S subunit in the 70S ribosome.

In terms of biological role, this is one of the proteins that bind and probably mediate the attachment of the 5S RNA into the large ribosomal subunit, where it forms part of the central protuberance. In the 70S ribosome it contacts protein S13 of the 30S subunit (bridge B1b), connecting the 2 subunits; this bridge is implicated in subunit movement. Contacts the P site tRNA; the 5S rRNA and some of its associated proteins might help stabilize positioning of ribosome-bound tRNAs. In Corynebacterium aurimucosum (strain ATCC 700975 / DSM 44827 / CIP 107346 / CN-1) (Corynebacterium nigricans), this protein is Large ribosomal subunit protein uL5.